The following is a 233-amino-acid chain: Probable septum site-determining protein MinC (233 aa).

The segment at 104–124 (QKMATPEPAPAPAPVVDPNAP) is disordered.

Belongs to the MinC family. In terms of assembly, interacts with MinD and FtsZ.

Its function is as follows. Cell division inhibitor that blocks the formation of polar Z ring septums. Rapidly oscillates between the poles of the cell to destabilize FtsZ filaments that have formed before they mature into polar Z rings. Prevents FtsZ polymerization. The protein is Probable septum site-determining protein MinC of Serratia proteamaculans (strain 568).